We begin with the raw amino-acid sequence, 578 residues long: Trehalase (578 aa).

An N-terminal signal peptide occupies residues 1–19 (MPGSTWELHLLLLLGLGLG). N-linked (GlcNAc...) asparagine glycosylation occurs at N78. Residues R168, 175–176 (WD), N212, and 221–223 (RSQ) contribute to the substrate site. N261 is a glycosylation site (N-linked (GlcNAc...) asparagine). Residues 286–288 (RPE) and G319 each bind substrate. Catalysis depends on D321, which acts as the Proton donor/acceptor. N-linked (GlcNAc...) asparagine glycosylation occurs at N369. Catalysis depends on E514, which acts as the Proton donor/acceptor. E528 is a substrate binding site. Residue S555 is the site of GPI-anchor amidated serine attachment. A propeptide spans 556-578 (GTQLALLEPHCLAAALLLSFLTR) (removed in mature form).

This sequence belongs to the glycosyl hydrolase 37 family. As to quaternary structure, homodimer; disulfide-linked. As to expression, expressed in small intestine, kidney, and to a lesser extent in liver.

Its subcellular location is the cell membrane. The catalysed reaction is alpha,alpha-trehalose + H2O = alpha-D-glucose + beta-D-glucose. Its function is as follows. Intestinal trehalase is probably involved in the hydrolysis of ingested trehalose. The chain is Trehalase (TREH) from Oryctolagus cuniculus (Rabbit).